The following is a 236-amino-acid chain: Small ribosomal subunit protein uS3 (236 aa).

A KH type-2 domain is found at 39–107 (IREILHKELK…DVVINIVEIR (69 aa)). Positions 213–236 (MAQDKRMNEGGGESPSPRSRRDAA) are disordered.

The protein belongs to the universal ribosomal protein uS3 family. In terms of assembly, part of the 30S ribosomal subunit. Forms a tight complex with proteins S10 and S14.

Binds the lower part of the 30S subunit head. Binds mRNA in the 70S ribosome, positioning it for translation. This Bradyrhizobium sp. (strain ORS 278) protein is Small ribosomal subunit protein uS3.